Consider the following 589-residue polypeptide: UvrABC system protein C (589 aa).

One can recognise a GIY-YIG domain in the interval 13-90 (PNPGCYLFKN…IKTHTPKYNF (78 aa)). The UVR domain maps to 194 to 229 (KDILKKLHHLMQKASEKMFYEKAQEYRDIIDSIKQT).

This sequence belongs to the UvrC family. In terms of assembly, interacts with UvrB in an incision complex.

Its subcellular location is the cytoplasm. In terms of biological role, the UvrABC repair system catalyzes the recognition and processing of DNA lesions. UvrC both incises the 5' and 3' sides of the lesion. The N-terminal half is responsible for the 3' incision and the C-terminal half is responsible for the 5' incision. The polypeptide is UvrABC system protein C (Aster yellows witches'-broom phytoplasma (strain AYWB)).